Reading from the N-terminus, the 343-residue chain is Calcium/calmodulin-dependent protein kinase type 1B (343 aa).

The Protein kinase domain maps to 15–270 (YEIRERLGSG…CQQALRHLWI (256 aa)). ATP-binding positions include 21-29 (LGSGAFSEV) and Lys44. Asp136 serves as the catalytic Proton acceptor. The calmodulin-binding stretch occupies residues 290-311 (KNFARTHWKRAFNATSFLRHIR). The tract at residues 319 to 343 (GEGASEQGMARHSHSGLRAGQPPKW) is disordered.

Belongs to the protein kinase superfamily. CAMK Ser/Thr protein kinase family. CaMK subfamily. Phosphorylated by CAMKK1.

Its subcellular location is the cytoplasm. It localises to the nucleus. The catalysed reaction is L-seryl-[protein] + ATP = O-phospho-L-seryl-[protein] + ADP + H(+). It catalyses the reaction L-threonyl-[protein] + ATP = O-phospho-L-threonyl-[protein] + ADP + H(+). Activated by Ca(2+)/calmodulin. In terms of biological role, calcium/calmodulin-dependent protein kinase belonging to a proposed calcium-triggered signaling cascade. In vitro phosphorylates CREB1 and SYN1/synapsin I. Phosphorylates and activates CAMK1. This Homo sapiens (Human) protein is Calcium/calmodulin-dependent protein kinase type 1B (PNCK).